The chain runs to 256 residues: Sec-independent protein translocase protein TatC (256 aa).

Transmembrane regions (helical) follow at residues 25–45, 77–97, 117–137, 158–178, 195–215, and 217–237; these read VICVVLVFVALVYFSNDIYHF, AIVAIFISVPYLLYQIWAFIA, ILFYCGVAFAYYIVFPLVFSF, FALALFLAFGVCFEVPIAIIL, PYIIVAAFFIGMLLTPPDVFS, and TLLAIPMCLLFELGLLVARFY.

The protein belongs to the TatC family. As to quaternary structure, the Tat system comprises two distinct complexes: a TatABC complex, containing multiple copies of TatA, TatB and TatC subunits, and a separate TatA complex, containing only TatA subunits. Substrates initially bind to the TatABC complex, which probably triggers association of the separate TatA complex to form the active translocon.

Its subcellular location is the cell inner membrane. Its function is as follows. Part of the twin-arginine translocation (Tat) system that transports large folded proteins containing a characteristic twin-arginine motif in their signal peptide across membranes. Together with TatB, TatC is part of a receptor directly interacting with Tat signal peptides. The sequence is that of Sec-independent protein translocase protein TatC from Haemophilus influenzae (strain ATCC 51907 / DSM 11121 / KW20 / Rd).